Consider the following 897-residue polypeptide: Ubiquitin carboxyl-terminal hydrolase 33 (897 aa).

The segment at N7–V110 adopts a UBP-type zinc-finger fold. Residues C9, H11, C31, C34, C44, C49, C54, H61, H65, H71, C84, and C87 each contribute to the Zn(2+) site. One can recognise a USP domain in the interval T156–S670. C165 (nucleophile) is an active-site residue. 2 disordered regions span residues L261–V308 and G343–V420. Residues D287–S297 are compositionally biased toward polar residues. 2 stretches are compositionally biased toward basic and acidic residues: residues D299–V308 and S344–D353. The span at T355 to I396 shows a compositional bias: polar residues. A compositionally biased stretch (low complexity) spans S398–P411. H628 acts as the Proton acceptor in catalysis. DUSP domains are found at residues D672–C765 and E773–V876. Over residues S875–S884 the composition is skewed to low complexity. The tract at residues S875–V897 is disordered. A compositionally biased stretch (basic and acidic residues) spans S886–V897.

The protein belongs to the peptidase C19 family. USP20/USP33 subfamily.

It localises to the cytoplasm. The protein localises to the perinuclear region. It is found in the cytoskeleton. Its subcellular location is the microtubule organizing center. The protein resides in the centrosome. It carries out the reaction Thiol-dependent hydrolysis of ester, thioester, amide, peptide and isopeptide bonds formed by the C-terminal Gly of ubiquitin (a 76-residue protein attached to proteins as an intracellular targeting signal).. Deubiquitinating enzyme involved in various processes such as centrosome duplication, cellular migration and beta-2 adrenergic receptor/ADRB2 recycling. Involved in regulation of centrosome duplication by mediating deubiquitination of ccp110 in S and G2/M phase, leading to stabilize ccp110 during the period which centrioles duplicate and elongate. Involved in cell migration via its interaction with intracellular domain of robo1, leading to regulate the Slit signaling. Plays a role in commissural axon guidance cross the ventral midline of the neural tube in a Slit-dependent manner, possibly by mediating the deubiquitination of robo1. Acts as a regulator of G-protein coupled receptor (GPCR) signaling by mediating the deubiquitination of beta-arrestins (arrb1 and arrb2) and beta-2 adrenergic receptor (adrb2). Deubiquitinates dio2, thereby regulating thyroid hormone regulation. Mediates deubiquitination of both 'Lys-48'- and 'Lys-63'-linked polyubiquitin chains. The sequence is that of Ubiquitin carboxyl-terminal hydrolase 33 (usp33) from Danio rerio (Zebrafish).